The following is a 413-amino-acid chain: Probable elongation factor 1-gamma 2 (413 aa).

Positions 1–82 constitute a GST N-terminal domain; that stretch reads MALVMHTYKG…YVSRKNGDNS (82 aa). Residues 87 to 215 enclose the GST C-terminal domain; sequence SLIEYAHIEQ…AKQTEAVPPV (129 aa). The interval 207–260 is disordered; the sequence is KQTEAVPPVPTKKAPQPAKPKEEPKKAAPVAEAPKPAEEEEAPKPKAKNPLDLL. Positions 253–413 constitute an EF-1-gamma C-terminal domain; the sequence is AKNPLDLLPP…EALLDAKCFK (161 aa).

In terms of assembly, EF-1 is composed of four subunits: alpha, beta, delta, and gamma.

Functionally, probably plays a role in anchoring the complex to other cellular components. This chain is Probable elongation factor 1-gamma 2, found in Arabidopsis thaliana (Mouse-ear cress).